The chain runs to 346 residues: Syntaxin UFE1 (346 aa).

The Cytoplasmic segment spans residues Met-1–Thr-324. In terms of domain architecture, t-SNARE coiled-coil homology spans Leu-255–Ala-317. A helical; Anchor for type IV membrane protein membrane pass occupies residues Ala-325–Leu-342. Topologically, residues Asp-343–Gly-346 are lumenal.

The protein belongs to the syntaxin family. In terms of assembly, component of a SNARE complex consisting of UFE1, USE1, SEC20 and SEC22 or YKT6.

The protein resides in the endoplasmic reticulum membrane. In terms of biological role, syntaxin required for targeting and fusion of Golgi-derived retrograde transport vesicles with the ER. The protein is Syntaxin UFE1 (UFE1) of Saccharomyces cerevisiae (strain ATCC 204508 / S288c) (Baker's yeast).